The following is a 157-amino-acid chain: Class I hydrophobin rodA (157 aa).

The N-terminal stretch at 1 to 41 (MKFSIAAAVVAFAASVAALPPAHDSQFAGNGVGNKGNSNVK) is a signal peptide. Residue N47 is glycosylated (N-linked (GlcNAc...) asparagine). 4 disulfides stabilise this stretch: C57–C131, C65–C125, C66–C106, and C132–C150.

This sequence belongs to the fungal hydrophobin family. In terms of assembly, self-assembles to form functional amyloid fibrils called rodlets. Self-assembly into fibrillar rodlets occurs spontaneously at hydrophobic:hydrophilic interfaces and the rodlets further associate laterally to form amphipathic monolayers.

The protein localises to the secreted. The protein resides in the spore wall. Aerial growth, conidiation, and dispersal of filamentous fungi in the environment rely upon a capability of their secreting small amphipathic proteins called hydrophobins (HPBs) with low sequence identity. Class I can self-assemble into an outermost layer of rodlet bundles on aerial cell surfaces, conferring cellular hydrophobicity that supports fungal growth, development and dispersal; whereas Class II form highly ordered films at water-air interfaces through intermolecular interactions but contribute nothing to the rodlet structure. RodA is a class I hydrophobin that contributes to surface hydrophobicity, which is important for processes such as association of hyphae in reproductive structures, dispersal of aerial spores and adhesion of pathogens to host structures. Important for the formation of hydrophobic rodlet layers of asexually-produced spores. Promotes also biofilm formation and may enhance lignocellulose utilization via promoting a compact substrate-enzyme-fungus structure. The protein is Class I hydrophobin rodA of Emericella nidulans (strain FGSC A4 / ATCC 38163 / CBS 112.46 / NRRL 194 / M139) (Aspergillus nidulans).